The following is a 618-amino-acid chain: UvrABC system protein C (618 aa).

One can recognise a GIY-YIG domain in the interval 15–93 (RTPGVYLMKD…IKEHHPRYNI (79 aa)). Positions 203–238 (NNLLRELRERMKMAAEQMNYEEAAFLRDRIRAIEET) constitute a UVR domain.

It belongs to the UvrC family. As to quaternary structure, interacts with UvrB in an incision complex.

Its subcellular location is the cytoplasm. Functionally, the UvrABC repair system catalyzes the recognition and processing of DNA lesions. UvrC both incises the 5' and 3' sides of the lesion. The N-terminal half is responsible for the 3' incision and the C-terminal half is responsible for the 5' incision. In Syntrophus aciditrophicus (strain SB), this protein is UvrABC system protein C.